Consider the following 301-residue polypeptide: CPX chromosomal region candidate gene 1 protein (301 aa).

Positions 1–77 are disordered; sequence MSYPTKEGSD…ENSELETEIQ (77 aa). Over residues 44-60 the composition is skewed to polar residues; it reads VETNPINREPGTATSQE.

In terms of tissue distribution, expressed in a variety of fetal tissues.

The chain is CPX chromosomal region candidate gene 1 protein (CPXCR1) from Homo sapiens (Human).